The following is a 157-amino-acid chain: MSSEEGKLFVGGLNFNTDEQALEDHFSSFGPISEVVVVKDRETQRSRGFGFITFTNPEHASVAMRAMNGESLDGRQIRVDHAGKSARGTRGGGFGAHGRGRSYSRGGGDQGYGSGRYYDSRPGGYGYGYGRSRDYNGRNQGGYDRYSGGNYRDNYDN.

Residues Gly6–Lys84 enclose the RRM domain. At Arg47 the chain carries Omega-N-methylarginine. A disordered region spans residues His81–Asn157. Arg105 bears the Asymmetric dimethylarginine; alternate mark. A Dimethylated arginine; in A2780 ovarian carcinoma cell line modification is found at Arg105. The residue at position 105 (Arg105) is an Omega-N-methylarginine; alternate. A compositionally biased stretch (gly residues) spans Arg105–Ser114. Omega-N-methylarginine is present on residues Arg121 and Arg131. Ser147 carries the phosphoserine modification. Tyr155 carries the phosphotyrosine modification.

Interacts with RPL4. Associates with the 60S ribosomal subunits in an RNA-independent manner. Associates with ribosomes. Arg-105 is dimethylated, probably to asymmetric dimethylarginine. In terms of processing, phosphorylated.

It localises to the nucleus. The protein localises to the cytoplasm. Its subcellular location is the cell projection. It is found in the dendrite. Functionally, cold-inducible mRNA binding protein that enhances global protein synthesis at both physiological and mild hypothermic temperatures. Reduces the relative abundance of microRNAs, when overexpressed. Enhances phosphorylation of translation initiation factors and active polysome formation. The polypeptide is RNA-binding protein 3 (RBM3) (Homo sapiens (Human)).